We begin with the raw amino-acid sequence, 283 residues long: MIARILDGRTCAEKVKARVKENIRLLQEKGLPSPGLAVILVGNDPASATYVAHKERACQAVGIRSTVYRMPNTITESELASKIDECNRDSNTHGILLQLPLPAHIDPANLLERIRPDKDVDGFHPYNLGRLVQRRPALRPCTPYGVMTLLTETHENLEGKHAVIIGASNIVGRPMALELLLAKCTVTVCHRFTRDLAEHVKSAELLIVAIGKPGIIQSEWIKPGAIVIDVGFSRLSPNKIAGDIDFETAKERASWITPVPGGVGPMTVATLLENTLQAAQTFL.

166-168 (GAS) provides a ligand contact to NADP(+).

Belongs to the tetrahydrofolate dehydrogenase/cyclohydrolase family. In terms of assembly, homodimer.

The enzyme catalyses (6R)-5,10-methylene-5,6,7,8-tetrahydrofolate + NADP(+) = (6R)-5,10-methenyltetrahydrofolate + NADPH. It carries out the reaction (6R)-5,10-methenyltetrahydrofolate + H2O = (6R)-10-formyltetrahydrofolate + H(+). Its pathway is one-carbon metabolism; tetrahydrofolate interconversion. Functionally, catalyzes the oxidation of 5,10-methylenetetrahydrofolate to 5,10-methenyltetrahydrofolate and then the hydrolysis of 5,10-methenyltetrahydrofolate to 10-formyltetrahydrofolate. The sequence is that of Bifunctional protein FolD from Coxiella burnetii (strain CbuK_Q154) (Coxiella burnetii (strain Q154)).